Consider the following 301-residue polypeptide: Protease HtpX homolog (301 aa).

2 helical membrane passes run 11 to 31 (VLLL…IAGA) and 34 to 54 (NSAF…YSYW). Residue His138 participates in Zn(2+) binding. Residue Glu139 is part of the active site. His142 serves as a coordination point for Zn(2+). Helical transmembrane passes span 154-174 (AAAV…AAIF) and 188-208 (LVGL…QLAI). Glu213 is a Zn(2+) binding site.

Belongs to the peptidase M48B family. It depends on Zn(2+) as a cofactor.

The protein localises to the cell membrane. The chain is Protease HtpX homolog from Kocuria rhizophila (strain ATCC 9341 / DSM 348 / NBRC 103217 / DC2201).